The following is a 235-amino-acid chain: Serine/arginine-rich splicing factor 7 (235 aa).

Positions Thr-11–Gly-84 constitute an RRM domain. Residue Lys-24 is modified to N6-acetyllysine; alternate. Lys-24 is covalently cross-linked (Glycyl lysine isopeptide (Lys-Gly) (interchain with G-Cter in SUMO2); alternate). Phosphoserine is present on Ser-32. The tract at residues Leu-81–Arg-98 is sufficient for interaction with NXF1. The CCHC-type zinc finger occupies Asp-104–His-120. Positions Ser-123–Arg-180 are enriched in basic residues. The disordered stretch occupies residues Ser-123–Asp-235. Tandem repeats lie at residues Arg-153–Pro-160, Arg-161–Leu-168, Arg-169–Leu-176, and Arg-177–Ile-184. The 6 X 8 AA repeats of R-R-S-R-S-X-S-X stretch occupies residues Arg-153–Gly-223. Phosphoserine occurs at positions 163, 165, and 167. 5 positions are modified to phosphoserine: Ser-181, Ser-183, Ser-189, Ser-191, and Ser-193. Residues Ser-187 to Arg-219 show a composition bias toward basic residues. Residues Ser-208–Pro-215 form a 5; approximate repeat. A 6; approximate repeat occupies Lys-216–Gly-223. Residues Ser-228 and Ser-230 each carry the phosphoserine modification.

The protein belongs to the splicing factor SR family. Found in large molecular weight complexes containing CCNL1 and the p110 isoforms of either CDC2L1 or CDC2L2. Interacts with CCNL2 and CPSF6. Interacts with NXF1. Interacts with YTHDC1. Post-translationally, extensively phosphorylated on serine residues in the RS domain.

It is found in the nucleus. The protein resides in the cytoplasm. Its function is as follows. Required for pre-mRNA splicing. Represses the splicing of MAPT/Tau exon 10. May function as export adapter involved in mRNA nuclear export such as of histone H2A. Binds mRNA which is thought to be transferred to the NXF1-NXT1 heterodimer for export (TAP/NXF1 pathway); enhances NXF1-NXT1 RNA-binding activity. RNA-binding is semi-sequence specific. This Bos taurus (Bovine) protein is Serine/arginine-rich splicing factor 7 (SRSF7).